The following is a 373-amino-acid chain: Superinfection exclusion protein (373 aa).

An N-terminal signal peptide occupies residues Met-1 to Thr-15.

Belongs to the serpin family. Orthopoxvirus OPG040 subfamily. In terms of assembly, interacts with A56 protein.

It localises to the virion membrane. The protein localises to the host cell membrane. Functionally, prevents cell to cell fusion via its interaction with A56 protein. The A56-K2 complex associates with components of the entry fusion complex (EFC) presumably to avoid superinfection and syncytium formation. This Homo sapiens (Human) protein is Superinfection exclusion protein (OPG040).